Reading from the N-terminus, the 134-residue chain is Small ribosomal subunit protein uS11 (134 aa).

2 disordered regions span residues 1–22 (MPPKGRQGAAKKVRRKEKKNVA) and 114–134 (SIQDVTPTPHNGCRPPKRRRV). Over residues 9 to 22 (AAKKVRRKEKKNVA) the composition is skewed to basic residues.

The protein belongs to the universal ribosomal protein uS11 family. In terms of assembly, part of the 30S ribosomal subunit. Interacts with proteins S7 and S18. Binds to IF-3.

Its function is as follows. Located on the platform of the 30S subunit, it bridges several disparate RNA helices of the 16S rRNA. Forms part of the Shine-Dalgarno cleft in the 70S ribosome. The polypeptide is Small ribosomal subunit protein uS11 (Streptomyces avermitilis (strain ATCC 31267 / DSM 46492 / JCM 5070 / NBRC 14893 / NCIMB 12804 / NRRL 8165 / MA-4680)).